A 671-amino-acid chain; its full sequence is UvrABC system protein B (671 aa).

A Helicase ATP-binding domain is found at 25 to 412; sequence EGIEAGLSHQ…AGRVVEQVVR (388 aa). Position 38–45 (38–45) interacts with ATP; the sequence is GVTGSGKT. Residues 91 to 114 carry the Beta-hairpin motif; sequence YYDYYQPEAYVPSSDTFIEKDASI. In terms of domain architecture, Helicase C-terminal spans 429 to 582; it reads QVDDLLSEIR…QIAFNEANGI (154 aa). Positions 632–667 constitute a UVR domain; sequence TKRIKQLEEKMMQFARDLEFEAAAQLRDEIAQLRER.

Belongs to the UvrB family. In terms of assembly, forms a heterotetramer with UvrA during the search for lesions. Interacts with UvrC in an incision complex.

It localises to the cytoplasm. Functionally, the UvrABC repair system catalyzes the recognition and processing of DNA lesions. A damage recognition complex composed of 2 UvrA and 2 UvrB subunits scans DNA for abnormalities. Upon binding of the UvrA(2)B(2) complex to a putative damaged site, the DNA wraps around one UvrB monomer. DNA wrap is dependent on ATP binding by UvrB and probably causes local melting of the DNA helix, facilitating insertion of UvrB beta-hairpin between the DNA strands. Then UvrB probes one DNA strand for the presence of a lesion. If a lesion is found the UvrA subunits dissociate and the UvrB-DNA preincision complex is formed. This complex is subsequently bound by UvrC and the second UvrB is released. If no lesion is found, the DNA wraps around the other UvrB subunit that will check the other stand for damage. In Pseudomonas putida (strain ATCC 47054 / DSM 6125 / CFBP 8728 / NCIMB 11950 / KT2440), this protein is UvrABC system protein B.